We begin with the raw amino-acid sequence, 736 residues long: Dynamin-1-like protein (736 aa).

Met-1 carries the N-acetylmethionine modification. Residues 22-302 form the Dynamin-type G domain; sequence IIQLPQIVVV…LMHHIRDCLP (281 aa). The segment at 32–39 is G1 motif; it reads GTQSSGKS. GTP is bound at residue 32–40; sequence GTQSSGKSS. Residues 58-60 form a G2 motif region; that stretch reads VTR. Residues 146–149 are G3 motif; sequence DLPG. A G4 motif region spans residues 215–218; the sequence is TKLD. Residues 215–221 and 246–249 contribute to the GTP site; these read TKLDLMD and NRSQ. Residues 245 to 248 form a G5 motif region; sequence VNRS. The segment at 344–489 is middle domain; the sequence is YCNTIEGTAK…NEMVHNLVAI (146 aa). The tract at residues 448 to 685 is interaction with GSK3B; sequence NYSTQELLRF…NHVKDTLQSE (238 aa). Residues 502–569 are b domain; it reads ADACGLMNNN…IQDSRRETKN (68 aa). A disordered region spans residues 523–590; the sequence is ELPSAVSRDK…VQEPTTGNWR (68 aa). Ser-529 carries the post-translational modification Phosphoserine. Glycyl lysine isopeptide (Lys-Gly) (interchain with G-Cter in SUMO) cross-links involve residues Lys-532 and Lys-535. A compositionally biased stretch (low complexity) spans 537 to 554; that stretch reads PSALAPASQEPSPAASAE. The residue at position 548 (Ser-548) is a Phosphoserine. Basic and acidic residues predominate over residues 555-568; the sequence is ADGKLIQDSRRETK. Glycyl lysine isopeptide (Lys-Gly) (interchain with G-Cter in SUMO) cross-links involve residues Lys-558 and Lys-568. O-linked (GlcNAc) threonine glycans are attached at residues Thr-585 and Thr-586. Lys-594 participates in a covalent cross-link: Glycyl lysine isopeptide (Lys-Gly) (interchain with G-Cter in SUMO). At Lys-597 the chain carries N6-acetyllysine; alternate. A Glycyl lysine isopeptide (Lys-Gly) (interchain with G-Cter in SUMO); alternate cross-link involves residue Lys-597. Lys-606 participates in a covalent cross-link: Glycyl lysine isopeptide (Lys-Gly) (interchain with G-Cter in SUMO). Ser-607 carries the post-translational modification Phosphoserine. Lys-608 participates in a covalent cross-link: Glycyl lysine isopeptide (Lys-Gly) (interchain with G-Cter in SUMO). A Phosphoserine; by CDK1 and PINK1 modification is found at Ser-616. Residue Ser-637 is modified to Phosphoserine; by CAMK1 and PKA. An S-nitrosocysteine modification is found at Cys-644. The 92-residue stretch at 644-735 folds into the GED domain; the sequence is CEVIERLIKS…IIAEIRETHL (92 aa). The tract at residues 654 to 668 is important for homodimerization; that stretch reads YFLIVRKNIQDSVPK.

The protein belongs to the TRAFAC class dynamin-like GTPase superfamily. Dynamin/Fzo/YdjA family. In terms of assembly, homotetramer; dimerizes through the N-terminal GTP-middle region of one molecule binding to the GED domain of another DNM1L molecule. Oligomerizes in a GTP-dependent manner to form membrane-associated tubules with a spiral pattern. Interacts with GSK3B and MARCHF5. Interacts (via the GTPase and B domains) with UBE2I; the interaction promotes sumoylation of DNM1L, mainly in its B domain. Interacts with PPP3CA; the interaction dephosphorylates DNM1L and regulates its transition to mitochondria. Interacts with BCL2L1 isoform BCL-X(L) and CLTA; DNM1L and BCL2L1 isoform BCL-X(L) may form a complex in synaptic vesicles that also contains clathrin and MFF. Interacts with MFF; the interaction is inhibited by C11orf65/MFI. Interacts with FIS1; may form part of a larger protein complex at the endoplasmic reticulum-mitochondrial interface during mitochondrial fission. Interacts with CANX. Interacts with BCAP31. Interacts with MIEF2 and MIEF1; GTP-dependent, regulates GTP hydrolysis and DNM1L oligomerization. Interacts with PGAM5; this interaction leads to dephosphorylation at Ser-656 and activation of GTPase activity and eventually to mitochondria fragmentation. Interacts with RALBP1; during mitosis, recruits DNM1L to the mitochondrion and mediates its activation by the mitotic kinase cyclin B-CDK1. Interacts with FUNDC1; this interaction recruits DNM1L/DRP1 at ER-mitochondria contact sites. Post-translationally, phosphorylation/dephosphorylation events on two sites near the GED domain regulate mitochondrial fission. Phosphorylation on Ser-637 by CAMK1 and PKA inhibits the GTPase activity, leading to a defect in mitochondrial fission promoting mitochondrial elongation. Dephosphorylated on this site by PPP3CA which promotes mitochondrial fission. Phosphorylation on Ser-616 by CDK1 and PINK1 activates the GTPase activity and promotes mitochondrial fission. Phosphorylated in a circadian manner at Ser-637. Dephosphorylated by PGAM5. Sumoylated on various lysine residues within the B domain, probably by MUL1. Sumoylation positively regulates mitochondrial fission. Desumoylated by SENP5 during G2/M transition of mitosis. Appears to be linked to its catalytic activity. In terms of processing, S-nitrosylation increases DNM1L dimerization, mitochondrial fission and causes neuronal damage. Post-translationally, ubiquitination by MARCHF5 affects mitochondrial morphology. O-GlcNAcylation augments the level of the GTP-bound active form of DNM1L and induces translocation from the cytoplasm to mitochondria in cardiomyocytes. It also decreases phosphorylation at Ser-637. In terms of tissue distribution, ubiquitously expressed with highest levels found in skeletal muscles, heart, kidney and brain. Isoform 1 is brain-specific. Isoform 2 and isoform 3 are predominantly expressed in testis and skeletal muscles respectively. Isoform 4 is weakly expressed in brain, heart and kidney. Isoform 5 is dominantly expressed in liver, heart and kidney. Isoform 6 is expressed in neurons.

The protein localises to the cytoplasm. The protein resides in the cytosol. Its subcellular location is the golgi apparatus. It localises to the endomembrane system. It is found in the mitochondrion outer membrane. The protein localises to the peroxisome. The protein resides in the membrane. Its subcellular location is the clathrin-coated pit. It localises to the cytoplasmic vesicle. It is found in the secretory vesicle. The protein localises to the synaptic vesicle membrane. It carries out the reaction GTP + H2O = GDP + phosphate + H(+). Its activity is regulated as follows. GTPase activity is increased by binding to phospholipid membranes. Its function is as follows. Functions in mitochondrial and peroxisomal division. Mediates membrane fission through oligomerization into membrane-associated tubular structures that wrap around the scission site to constrict and sever the mitochondrial membrane through a GTP hydrolysis-dependent mechanism. The specific recruitment at scission sites is mediated by membrane receptors like MFF, MIEF1 and MIEF2 for mitochondrial membranes. While the recruitment by the membrane receptors is GTP-dependent, the following hydrolysis of GTP induces the dissociation from the receptors and allows DNM1L filaments to curl into closed rings that are probably sufficient to sever a double membrane. Acts downstream of PINK1 to promote mitochondrial fission in a PRKN-dependent manner. Plays an important role in mitochondrial fission during mitosis. Through its function in mitochondrial division, ensures the survival of at least some types of postmitotic neurons, including Purkinje cells, by suppressing oxidative damage. Required for normal brain development, including that of cerebellum. Facilitates developmentally regulated apoptosis during neural tube formation. Required for a normal rate of cytochrome c release and caspase activation during apoptosis; this requirement may depend upon the cell type and the physiological apoptotic cues. Required for formation of endocytic vesicles. Proposed to regulate synaptic vesicle membrane dynamics through association with BCL2L1 isoform Bcl-X(L) which stimulates its GTPase activity in synaptic vesicles; the function may require its recruitment by MFF to clathrin-containing vesicles. Required for programmed necrosis execution. Rhythmic control of its activity following phosphorylation at Ser-637 is essential for the circadian control of mitochondrial ATP production. In terms of biological role, inhibits peroxisomal division when overexpressed. The polypeptide is Dynamin-1-like protein (Homo sapiens (Human)).